The following is a 167-amino-acid chain: NAD(P)H-quinone oxidoreductase subunit J (167 aa).

This sequence belongs to the complex I 30 kDa subunit family. In terms of assembly, NDH-1 can be composed of about 15 different subunits; different subcomplexes with different compositions have been identified which probably have different functions.

The protein resides in the cellular thylakoid membrane. The catalysed reaction is a plastoquinone + NADH + (n+1) H(+)(in) = a plastoquinol + NAD(+) + n H(+)(out). It catalyses the reaction a plastoquinone + NADPH + (n+1) H(+)(in) = a plastoquinol + NADP(+) + n H(+)(out). Its function is as follows. NDH-1 shuttles electrons from an unknown electron donor, via FMN and iron-sulfur (Fe-S) centers, to quinones in the respiratory and/or the photosynthetic chain. The immediate electron acceptor for the enzyme in this species is believed to be plastoquinone. Couples the redox reaction to proton translocation, and thus conserves the redox energy in a proton gradient. Cyanobacterial NDH-1 also plays a role in inorganic carbon-concentration. The chain is NAD(P)H-quinone oxidoreductase subunit J from Trichodesmium erythraeum (strain IMS101).